A 28-amino-acid chain; its full sequence is Ranatuerin-2SEb (28 aa).

A disulfide bridge connects residues Cys23 and Cys28.

In terms of tissue distribution, expressed by the skin glands.

Its subcellular location is the secreted. Its function is as follows. Mast cell degranulating peptide. Causes histamine release from rat peritoneal mast cells in vitro. Has antibacterial activity against the Gram-negative bacterium E.coli K12 and Gram-positive bacterium M.luteus NCT C2665. This is Ranatuerin-2SEb from Lithobates sevosus (Dusky gopher frog).